The primary structure comprises 136 residues: Protein PsiE homolog (136 aa).

4 helical membrane-spanning segments follow: residues 15–35, 55–75, 82–102, and 108–128; these read ILQTVLNMGLLSLGLILVVFL, YELVEGLVVYFLYFEFIALIV, FHFPLRYFVYIGITAIVRLII, and PLDVLIYSAAILLLVITLWLC.

This sequence belongs to the PsiE family.

It is found in the cell inner membrane. In Enterobacter sp. (strain 638), this protein is Protein PsiE homolog.